The primary structure comprises 227 residues: tRNA (guanine-N(7)-)-methyltransferase (227 aa).

Residues glutamate 58, glutamate 83, aspartate 110, and aspartate 132 each contribute to the S-adenosyl-L-methionine site. Aspartate 132 is a catalytic residue. Substrate-binding positions include lysine 136, aspartate 168, and threonine 205–glutamate 208.

This sequence belongs to the class I-like SAM-binding methyltransferase superfamily. TrmB family.

The catalysed reaction is guanosine(46) in tRNA + S-adenosyl-L-methionine = N(7)-methylguanosine(46) in tRNA + S-adenosyl-L-homocysteine. It functions in the pathway tRNA modification; N(7)-methylguanine-tRNA biosynthesis. Functionally, catalyzes the formation of N(7)-methylguanine at position 46 (m7G46) in tRNA. This chain is tRNA (guanine-N(7)-)-methyltransferase, found in Acidithiobacillus ferrooxidans (strain ATCC 23270 / DSM 14882 / CIP 104768 / NCIMB 8455) (Ferrobacillus ferrooxidans (strain ATCC 23270)).